The chain runs to 535 residues: Berberine bridge enzyme-like 27 (535 aa).

An N-terminal signal peptide occupies residues 1-22 (MEILRFLLSLFIYFLLLNLSLS). Asn18 and Asn66 each carry an N-linked (GlcNAc...) asparagine glycan. Cysteines 40 and 100 form a disulfide. An FAD-binding PCMH-type domain is found at 78 to 253 (ETPKPVSIIT…LSWKIRLLDV (176 aa)). The residue at position 115 (His115) is a Pros-8alpha-FAD histidine. Residues Asn146, Asn215, and Asn439 are each glycosylated (N-linked (GlcNAc...) asparagine).

This sequence belongs to the oxygen-dependent FAD-linked oxidoreductase family. It depends on FAD as a cofactor. Accumulates in cell walls of etiolated hypocotyls.

It localises to the secreted. It is found in the cell wall. The protein is Berberine bridge enzyme-like 27 of Arabidopsis thaliana (Mouse-ear cress).